The chain runs to 120 residues: MKKIMSTNPKTPELIQKLKEESFKNSAPIWKDVAKKLAKPARKKVEVNVSKISRYASEGDVLLIPGKVLGAGSLKVNVTVAAFSFSETAKSAIEAVGGKCLTIEELIAENPKGSKVTIMA.

This sequence belongs to the eukaryotic ribosomal protein eL18 family.

The polypeptide is Large ribosomal subunit protein eL18 (Methanococcus maripaludis (strain DSM 14266 / JCM 13030 / NBRC 101832 / S2 / LL)).